A 363-amino-acid polypeptide reads, in one-letter code: Pyrimidine monooxygenase RutA (363 aa).

FMN-binding positions include 49–50 (IK), asparagine 115, glutamate 124, 140–141 (RY), and serine 190.

It belongs to the NtaA/SnaA/DszA monooxygenase family. RutA subfamily.

It catalyses the reaction uracil + FMNH2 + NADH + O2 = (Z)-3-ureidoacrylate + FMN + NAD(+) + H2O + H(+). It carries out the reaction thymine + FMNH2 + NADH + O2 = (Z)-2-methylureidoacrylate + FMN + NAD(+) + H2O + H(+). In terms of biological role, catalyzes the pyrimidine ring opening between N-3 and C-4 by an unusual flavin hydroperoxide-catalyzed mechanism, adding oxygen atoms in the process to yield ureidoacrylate peracid, that immediately reacts with FMN forming ureidoacrylate and FMN-N(5)-oxide. The FMN-N(5)-oxide reacts spontaneously with NADH to produce FMN. Requires the flavin reductase RutF to regenerate FMN in vivo. This chain is Pyrimidine monooxygenase RutA, found in Escherichia coli O103:H2 (strain 12009 / EHEC).